A 335-amino-acid polypeptide reads, in one-letter code: MPAVLGFEGSANKIGVGVVRDGKVLANPRRTYVTPPGTGFLPGDTARHHRAVILDLLQEALTEAGLTSEDIDCIAYTKGPGMGAPLVSVAVVARTVAQLWNKPLLGVNHCIGHIEMGRLITGATNPTVLYVSGGNTQVIAYSEHRYRIFGETIDIAVGNCLDRFARVLKISNDPSPGYNIEQMAKRGKKLVELPYTVKGMDVSFSGILSFIEDVAQRMLATGECTPEDLCFSLQETVFAMLVEITERAMAHCGSQEALIVGGVGCNVRLQEMMETMCQERGARLFATDERFCIDNGAMIAQAGWEMFQAGHRTPLSESGITQRYRTDEVEVTWRD.

His109, His113, and Tyr130 together coordinate a divalent metal cation. Residues 130–134, Asp162, Gly177, Glu181, and Asn266 each bind substrate; that span reads YVSGG. An a divalent metal cation-binding site is contributed by Asp294.

It belongs to the KAE1 / TsaD family. In terms of assembly, component of the EKC/KEOPS complex composed of at least GON7, TP53RK, TPRKB, OSGEP and LAGE3; the whole complex dimerizes. The cofactor is a divalent metal cation.

The protein resides in the cytoplasm. It is found in the nucleus. The enzyme catalyses L-threonylcarbamoyladenylate + adenosine(37) in tRNA = N(6)-L-threonylcarbamoyladenosine(37) in tRNA + AMP + H(+). Its function is as follows. Component of the EKC/KEOPS complex that is required for the formation of a threonylcarbamoyl group on adenosine at position 37 (t(6)A37) in tRNAs that read codons beginning with adenine. The complex is probably involved in the transfer of the threonylcarbamoyl moiety of threonylcarbamoyl-AMP (TC-AMP) to the N6 group of A37. OSGEP likely plays a direct catalytic role in this reaction, but requires other protein(s) of the complex to fulfill this activity. This Bos taurus (Bovine) protein is tRNA N6-adenosine threonylcarbamoyltransferase.